The chain runs to 146 residues: Large ribosomal subunit protein uL13 (146 aa).

Belongs to the universal ribosomal protein uL13 family. In terms of assembly, part of the 50S ribosomal subunit.

Functionally, this protein is one of the early assembly proteins of the 50S ribosomal subunit, although it is not seen to bind rRNA by itself. It is important during the early stages of 50S assembly. The chain is Large ribosomal subunit protein uL13 from Methylobacillus flagellatus (strain ATCC 51484 / DSM 6875 / VKM B-1610 / KT).